A 513-amino-acid polypeptide reads, in one-letter code: L-threonine dehydratase biosynthetic IlvA (513 aa).

The residue at position 61 (K61) is an N6-(pyridoxal phosphate)lysine. Residues N88, 187–191 (GGGGL), and S314 contribute to the pyridoxal 5'-phosphate site. 2 ACT-like domains span residues 338–409 (ALLA…DLSN) and 432–504 (RLYS…DVTE).

The protein belongs to the serine/threonine dehydratase family. In terms of assembly, homotetramer. Pyridoxal 5'-phosphate is required as a cofactor.

It carries out the reaction L-threonine = 2-oxobutanoate + NH4(+). It participates in amino-acid biosynthesis; L-isoleucine biosynthesis; 2-oxobutanoate from L-threonine: step 1/1. In terms of biological role, catalyzes the anaerobic formation of alpha-ketobutyrate and ammonia from threonine in a two-step reaction. The first step involved a dehydration of threonine and a production of enamine intermediates (aminocrotonate), which tautomerizes to its imine form (iminobutyrate). Both intermediates are unstable and short-lived. The second step is the nonenzymatic hydrolysis of the enamine/imine intermediates to form 2-ketobutyrate and free ammonia. In the low water environment of the cell, the second step is accelerated by RidA. This Pasteurella multocida (strain Pm70) protein is L-threonine dehydratase biosynthetic IlvA (ilvA).